Reading from the N-terminus, the 74-residue chain is Progonadoliberin-3 (74 aa).

A signal peptide spans 1-15 (VRVVVLALVAQVTLS). Gln16 carries the post-translational modification Pyrrolidone carboxylic acid. A Glycine amide modification is found at Gly25.

It belongs to the GnRH family.

The protein resides in the secreted. Its function is as follows. Stimulates the secretion of gonadotropins. This Oncorhynchus tshawytscha (Chinook salmon) protein is Progonadoliberin-3 (gnrh3).